A 503-amino-acid polypeptide reads, in one-letter code: NAD-dependent protein deacetylase HST1 (503 aa).

Residues 183–468 (RLPNFNTIDH…SLVAKKCHWD (286 aa)) form the Deacetylase sirtuin-type domain. Residues 208–227 (GAGV…EGFY) and 290–293 (QNID) each bind NAD(+). The Proton acceptor role is filled by His310. Zn(2+)-binding residues include Cys318, Cys321, Cys342, and Cys345. Residues 412–414 (GTS), 437–439 (NRD), and Cys454 contribute to the NAD(+) site.

The protein belongs to the sirtuin family. Class I subfamily. In terms of assembly, identified in the Set3C complex with HOS2, SIF2, SNT1, CPR1, HOS4/YIL112W and SET3. Its presence is however not essential for meiotic repression by the Set3C complex. Interacts with SUM1 and RFM1. The interaction with SUM1 is mediated by RFM1. The cofactor is Zn(2+).

Its subcellular location is the nucleus. It carries out the reaction N(6)-acetyl-L-lysyl-[protein] + NAD(+) + H2O = 2''-O-acetyl-ADP-D-ribose + nicotinamide + L-lysyl-[protein]. NAD-dependent histone deacetylase involved in telomeric silencing. Histone deacetylase proteins act via the formation of large multiprotein complexes that are responsible for the deacetylation of lysine residues on the N-terminal part of the core histones (H2A, H2B, H3 and H4). Histone deacetylation gives a tag for epigenetic repression and plays an important role in transcriptional regulation, cell cycle progression and developmental events. Restores silencing at HMR in SIR2 mutants when overexpressed. Required to repress middle sporulation genes during vegetative growth. Acts as a sensor of NAD(+) levels and regulator of NAD(+) biosynthesis. Regulates the gene expression of de novo NAD(+) biosynthesis genes. In Saccharomyces cerevisiae (strain ATCC 204508 / S288c) (Baker's yeast), this protein is NAD-dependent protein deacetylase HST1 (HST1).